A 104-amino-acid chain; its full sequence is Ig lambda-3 chain C region (104 aa).

The Ig-like domain maps to 6–99 (PTLTMFPPSP…EGDTVEKSLS (94 aa)). A disulfide bridge links Cys-27 with Cys-85.

The sequence is that of Ig lambda-3 chain C region (Iglc3) from Mus musculus (Mouse).